The following is a 557-amino-acid chain: Dihydroxy-acid dehydratase (557 aa).

Aspartate 78 is a Mg(2+) binding site. Cysteine 119 contacts [2Fe-2S] cluster. Residues aspartate 120 and lysine 121 each contribute to the Mg(2+) site. The residue at position 121 (lysine 121) is an N6-carboxylysine. Cysteine 192 provides a ligand contact to [2Fe-2S] cluster. Glutamate 442 is a binding site for Mg(2+). Serine 468 (proton acceptor) is an active-site residue.

It belongs to the IlvD/Edd family. In terms of assembly, homodimer. [2Fe-2S] cluster serves as cofactor. It depends on Mg(2+) as a cofactor.

It catalyses the reaction (2R)-2,3-dihydroxy-3-methylbutanoate = 3-methyl-2-oxobutanoate + H2O. It carries out the reaction (2R,3R)-2,3-dihydroxy-3-methylpentanoate = (S)-3-methyl-2-oxopentanoate + H2O. The protein operates within amino-acid biosynthesis; L-isoleucine biosynthesis; L-isoleucine from 2-oxobutanoate: step 3/4. Its pathway is amino-acid biosynthesis; L-valine biosynthesis; L-valine from pyruvate: step 3/4. In terms of biological role, functions in the biosynthesis of branched-chain amino acids. Catalyzes the dehydration of (2R,3R)-2,3-dihydroxy-3-methylpentanoate (2,3-dihydroxy-3-methylvalerate) into 2-oxo-3-methylpentanoate (2-oxo-3-methylvalerate) and of (2R)-2,3-dihydroxy-3-methylbutanoate (2,3-dihydroxyisovalerate) into 2-oxo-3-methylbutanoate (2-oxoisovalerate), the penultimate precursor to L-isoleucine and L-valine, respectively. This chain is Dihydroxy-acid dehydratase, found in Bacillus mycoides (strain KBAB4) (Bacillus weihenstephanensis).